A 430-amino-acid polypeptide reads, in one-letter code: Gamma-glutamyl phosphate reductase (430 aa).

It belongs to the gamma-glutamyl phosphate reductase family.

The protein resides in the cytoplasm. It catalyses the reaction L-glutamate 5-semialdehyde + phosphate + NADP(+) = L-glutamyl 5-phosphate + NADPH + H(+). It functions in the pathway amino-acid biosynthesis; L-proline biosynthesis; L-glutamate 5-semialdehyde from L-glutamate: step 2/2. Its function is as follows. Catalyzes the NADPH-dependent reduction of L-glutamate 5-phosphate into L-glutamate 5-semialdehyde and phosphate. The product spontaneously undergoes cyclization to form 1-pyrroline-5-carboxylate. This chain is Gamma-glutamyl phosphate reductase, found in Methylococcus capsulatus (strain ATCC 33009 / NCIMB 11132 / Bath).